Reading from the N-terminus, the 315-residue chain is Pantothenate kinase (315 aa).

Residue 94–101 (GSVAVGKS) participates in ATP binding.

Belongs to the prokaryotic pantothenate kinase family.

It is found in the cytoplasm. It catalyses the reaction (R)-pantothenate + ATP = (R)-4'-phosphopantothenate + ADP + H(+). The protein operates within cofactor biosynthesis; coenzyme A biosynthesis; CoA from (R)-pantothenate: step 1/5. The polypeptide is Pantothenate kinase (Citrobacter koseri (strain ATCC BAA-895 / CDC 4225-83 / SGSC4696)).